A 280-amino-acid polypeptide reads, in one-letter code: P32 adhesin (280 aa).

A run of 2 helical transmembrane segments spans residues 13–37 and 68–92; these read FIVLALLFTTILIVSLSLLAFALVV and WFIPTVAGSFGFSALAIILGLAIGL. Polar residues predominate over residues 114 to 128; sequence EQLQRISDQQEQQTV. Disordered regions lie at residues 114 to 149 and 163 to 280; these read EQLQRISDQQEQQTVEIDPQQSQAQPSQPQVQQPLQ and FNPN…GLKP. 2 stretches are compositionally biased toward low complexity: residues 132–149 and 168–188; these read PQQSQAQPSQPQVQQPLQ and QQRPGFNQPNQQFQPHNNFNP. 13 tandem repeats follow at residues 163–168, 170–174, 186–190, 191–195, 196–200, 199–204, 206–210, 222–226, 227–231, 232–236, 249–254, 256–260, and 259–264. A 6 X 5 AA repeats of [FM]-N-P-N-M-Q region spans residues 163 to 264; that stretch reads FNPNMQQRPG…QRPGFNPNMQ (102 aa). A 5 X 5 AA repeats of R-P-G-F-N region spans residues 170 to 260; the sequence is RPGFNQPNQQ…PNMQQRPGFN (91 aa). Residues 186–226 form a 2 X 5 AA repeats of F-N-P-R-M region; the sequence is FNPRMNPNMQRPGFNPNMQQRPGFNQPNQQFQPHNNFNPRM. Over residues 204-224 the composition is skewed to low complexity; that stretch reads QQRPGFNQPNQQFQPHNNFNP. Residues 235-257 are compositionally biased toward low complexity; it reads FNQPHPNQFAQPNNFNPNMQQRP. Polar residues predominate over residues 261 to 271; sequence PNMQQRPNPSQ.

The protein localises to the cell projection. The protein resides in the attachment organelle membrane. Adhesin necessary for successful cytadherence and virulence. The sequence is that of P32 adhesin from Mycoplasma genitalium (strain ATCC 33530 / DSM 19775 / NCTC 10195 / G37) (Mycoplasmoides genitalium).